We begin with the raw amino-acid sequence, 244 residues long: Putative nucleosome assembly protein C36B7.08c (244 aa).

A disordered region spans residues 199–244; that stretch reads EAMTEEASDEDESVDLEEDEEEEDEEDEEGDEEKQEPPSKKSKKSN. The segment covering 201–232 has biased composition (acidic residues); that stretch reads MTEEASDEDESVDLEEDEEEEDEEDEEGDEEK. Residue Ser-211 is modified to Phosphoserine.

The protein belongs to the nucleosome assembly protein (NAP) family.

It is found in the nucleus. This chain is Putative nucleosome assembly protein C36B7.08c, found in Schizosaccharomyces pombe (strain 972 / ATCC 24843) (Fission yeast).